A 526-amino-acid polypeptide reads, in one-letter code: Tyrosine-protein kinase transforming protein Src (526 aa).

Residues 1 to 52 are disordered; sequence MGSSKSKPKDPSQRRRSLEPPDSTHHGGFPASQTPDETAAPDAHRNPSRSFG. G2 is lipidated: N-myristoyl glycine; by host. The span at 7–25 shows a compositional bias: basic and acidic residues; that stretch reads KPKDPSQRRRSLEPPDSTH. One can recognise an SH3 domain in the interval 81 to 142; sequence GGVTTFVALY…PSNYVAPSDS (62 aa). Residues 148–245 form the SH2 domain; it reads WYFGKITRRE…GLCHRLTNVC (98 aa). Residues 267 to 517 enclose the Protein kinase domain; sequence LRLEAKLGQG…TFKYLQAQLL (251 aa). ATP contacts are provided by residues 273–281 and K295; that span reads LGQGCFGEV. Catalysis depends on D386, which acts as the Proton acceptor. Position 416 is a phosphotyrosine; by autocatalysis (Y416).

Belongs to the protein kinase superfamily. Tyr protein kinase family. SRC subfamily. The cofactor is Mn(2+). The phosphorylated form is termed pp60v-src.

It catalyses the reaction L-tyrosyl-[protein] + ATP = O-phospho-L-tyrosyl-[protein] + ADP + H(+). In terms of biological role, this phosphoprotein, required for both the initiation and the maintenance of neoplastic transformation, is a protein kinase that catalyzes the phosphorylation of tyrosine residues in vitro. This is Tyrosine-protein kinase transforming protein Src (V-SRC) from Gallus gallus (Chicken).